A 209-amino-acid chain; its full sequence is Abscisic acid receptor PYL3 (209 aa).

Residues 1 to 23 are disordered; sequence MNLAPIHDPSSSSTTTTSSSTPY. The segment covering 10–21 has biased composition (low complexity); sequence SSSSTTTTSSST. The tract at residues 43–205 is START-like; sequence FPRSPNTCTS…NLQNLAVIST (163 aa). Residues Lys-79, 113-118, 140-146, and Glu-170 each bind abscisate; these read ASTSVE and RLNNYRS. A Gate loop motif is present at residues 109 to 113; sequence SGLPA. The short motif at 139-141 is the Latch loop element; it reads HRL.

It belongs to the PYR/PYL/RCAR abscisic acid intracellular receptor family. As to quaternary structure, homodimer and monomer. Binds ABA on one subunit only. ABA-binding favors monomer and trans-homodimer intermediate, and increases PP2C inhibitor activity. Binds both (-)-ABA and (+)-ABA. Binds to CARs protein in an ABA-independent manner, both at the plasma membrane and in the nucleus. Interacts with HAB1, ABI1 and ABI2, and possibly with other PP2Cs.

The protein resides in the cytoplasm. The protein localises to the nucleus. Its subcellular location is the cell membrane. In terms of biological role, receptor for abscisic acid (ABA) required for ABA-mediated responses such as stomatal closure and germination inhibition. Inhibits the activity of group-A protein phosphatases type 2C (PP2Cs) when activated by ABA. Can be activated by both (-)-ABA and (+)-ABA. This is Abscisic acid receptor PYL3 (PYL3) from Arabidopsis thaliana (Mouse-ear cress).